The following is a 240-amino-acid chain: 1-(5-phosphoribosyl)-5-[(5-phosphoribosylamino)methylideneamino] imidazole-4-carboxamide isomerase (240 aa).

Asp8 (proton acceptor) is an active-site residue. Asp129 acts as the Proton donor in catalysis.

The protein belongs to the HisA/HisF family.

The protein localises to the cytoplasm. The enzyme catalyses 1-(5-phospho-beta-D-ribosyl)-5-[(5-phospho-beta-D-ribosylamino)methylideneamino]imidazole-4-carboxamide = 5-[(5-phospho-1-deoxy-D-ribulos-1-ylimino)methylamino]-1-(5-phospho-beta-D-ribosyl)imidazole-4-carboxamide. The protein operates within amino-acid biosynthesis; L-histidine biosynthesis; L-histidine from 5-phospho-alpha-D-ribose 1-diphosphate: step 4/9. This chain is 1-(5-phosphoribosyl)-5-[(5-phosphoribosylamino)methylideneamino] imidazole-4-carboxamide isomerase, found in Listeria monocytogenes serotype 4b (strain F2365).